The primary structure comprises 194 residues: MDTAPASPEPFLVTPQAEVLEELIQAQMGPLPRLAAICRLKRLPSGGYSTTDDLHLVLERRRVANAKERERIKNLNRGFAKLKALVPFLPQSRKPSKVDILKGATEYIQILGCVLEEAKVSEKQSPEEQTHSGRPSDPHVSSTRELLGNATQPTSCASGLKKEEEGPWAYAGHSEPLYSYHQSTVPETRSYFTH.

The bHLH domain maps to 59–111; the sequence is ERRRVANAKERERIKNLNRGFAKLKALVPFLPQSRKPSKVDILKGATEYIQIL. Residues 121–137 show a composition bias toward basic and acidic residues; the sequence is SEKQSPEEQTHSGRPSD. Residues 121–163 form a disordered region; it reads SEKQSPEEQTHSGRPSDPHVSSTRELLGNATQPTSCASGLKKE. Residues 139 to 157 show a composition bias toward polar residues; sequence HVSSTRELLGNATQPTSCA.

Heterodimer with TCF3/isoform E12. In terms of tissue distribution, expressed only in the oocytes within the ovary and at lower level in the testis. Found in the resting oocytes of the primordial follicle cells, at the periphery of the ovary and in the hilar region. Also detected in growing oocytes, but at lower levels.

It localises to the nucleus. Functionally, germ-line specific transcription factor implicated in postnatal oocyte-specific gene expression. Plays a key regulatory role in the expression of multiple oocyte-specific genes, including those that initiate folliculogenesis and those that encode the zona pellucida (ZP1, ZP2 and ZP3) required for fertilization and early embryonic survival. Essential for oocytes to survive and form primordial follicles. The persistence of FIGLA in adult females suggests that it may regulate additional pathways that are essential for normal ovarian development. Binds to the E-box (5'-CANNTG-3') of the ZPs (ZP1, ZP2, ZP3) promoters. The protein is Factor in the germline alpha (Figla) of Mus musculus (Mouse).